We begin with the raw amino-acid sequence, 384 residues long: Dihydrolipoyllysine-residue acetyltransferase component of pyruvate dehydrogenase complex (384 aa).

The region spanning alanine 2–glycine 77 is the Lipoyl-binding domain. The residue at position 43 (lysine 43) is an N6-lipoyllysine. Histidine 356 is a catalytic residue.

This sequence belongs to the 2-oxoacid dehydrogenase family. In terms of assembly, forms a 24-polypeptide structural core with octahedral symmetry. Requires (R)-lipoate as cofactor.

It carries out the reaction N(6)-[(R)-dihydrolipoyl]-L-lysyl-[protein] + acetyl-CoA = N(6)-[(R)-S(8)-acetyldihydrolipoyl]-L-lysyl-[protein] + CoA. In terms of biological role, the pyruvate dehydrogenase complex catalyzes the overall conversion of pyruvate to acetyl-CoA and CO(2). It contains multiple copies of three enzymatic components: pyruvate dehydrogenase (E1), dihydrolipoamide acetyltransferase (E2) and lipoamide dehydrogenase (E3). This chain is Dihydrolipoyllysine-residue acetyltransferase component of pyruvate dehydrogenase complex (pdhC), found in Mycoplasma genitalium (strain ATCC 33530 / DSM 19775 / NCTC 10195 / G37) (Mycoplasmoides genitalium).